The sequence spans 618 residues: Nuclear cap-binding protein subunit 3 (618 aa).

Residues 1-53 (MAAVRGLRVSVKAGGGAEPEPMEVEEGEVEAAAGRTSPVEATADQTSPREVVP) form a disordered region. The segment covering 20-29 (EPMEVEEGEV) has biased composition (acidic residues). The segment at 117 to 178 (ETLYICGVDE…LSSKPTNEKG (62 aa)) is RNA recognition motif (RRM) domain. The short motif at 146–149 (WLDD) is the WLDD motif; essential for 7-methylguanosine-containing mRNA cap binding element. 3 disordered regions span residues 170 to 250 (SSKP…DLRP), 342 to 366 (PEEP…DDRV), and 426 to 618 (QLKT…DTDS). The segment covering 174–188 (TNEKGQRKKDGEHRS) has biased composition (basic and acidic residues). The segment covering 205-223 (DETEEGEVEEDNPNDAEVE) has biased composition (acidic residues). Polar residues predominate over residues 231 to 240 (PPETLSQAEQ). Residues 344–365 (EPIEEEEEEEEEEEEDMDEDDR) are compositionally biased toward acidic residues. Positions 436–450 (SDSAGNSVKSRIGSK) are enriched in polar residues. Positions 451–468 (SHSEKPADVRLILEEKRQ) are enriched in basic and acidic residues. Positions 469–481 (STASRQQSSSSGK) are enriched in low complexity. Composition is skewed to basic and acidic residues over residues 507–517 (SRREPLSDVHS), 550–562 (PKEK…KSGE), and 583–596 (IKEK…KSRL). The segment covering 609-618 (ESSSGSDTDS) has biased composition (low complexity).

Belongs to the NCBP3 family. Component of an alternative cap-binding complex (CBC) composed of NCBP1/CBP80 and NCBP3.

It localises to the nucleus. Its subcellular location is the cytoplasm. In terms of biological role, associates with NCBP1/CBP80 to form an alternative cap-binding complex (CBC) which plays a key role in mRNA export. NCBP3 serves as adapter protein linking the capped RNAs (m7GpppG-capped RNA) to NCBP1/CBP80. Unlike the conventional CBC with NCBP2 which binds both small nuclear RNA (snRNA) and messenger (mRNA) and is involved in their export from the nucleus, the alternative CBC with NCBP3 does not bind snRNA and associates only with mRNA thereby playing a role in only mRNA export. This is Nuclear cap-binding protein subunit 3 from Xenopus laevis (African clawed frog).